Reading from the N-terminus, the 530-residue chain is Tryptophan 7-halogenase RebH (530 aa).

7 residues coordinate FAD: glycine 13, threonine 15, alanine 16, alanine 39, aspartate 41, glutamate 49, and alanine 50. Lysine 79 is a catalytic residue. FAD-binding residues include valine 197 and threonine 348. Glutamate 357 contributes to the L-tryptophan binding site. Chloride-binding residues include threonine 359 and glycine 360. Isoleucine 361 contributes to the FAD binding site. The L-tryptophan site is built by tyrosine 454, tyrosine 455, glutamate 461, and phenylalanine 465.

It belongs to the flavin-dependent halogenase family. Bacterial tryptophan halogenase subfamily. Homodimer.

The catalysed reaction is L-tryptophan + FADH2 + chloride + O2 = 7-chloro-L-tryptophan + FAD + 2 H2O. Functionally, involved in the biosynthesis of the indolocarbazole antitumor agent rebeccamycin. Catalyzes the chlorination of tryptophan (Trp) at C7 position to yield 7-chlorotryptophan. It is also able to use bromide ions to generate monobrominated Trp. This is Tryptophan 7-halogenase RebH (rebH) from Lentzea aerocolonigenes (Lechevalieria aerocolonigenes).